The following is a 172-amino-acid chain: Translation initiation factor IF-3 (172 aa).

This sequence belongs to the IF-3 family. Monomer.

The protein localises to the cytoplasm. In terms of biological role, IF-3 binds to the 30S ribosomal subunit and shifts the equilibrium between 70S ribosomes and their 50S and 30S subunits in favor of the free subunits, thus enhancing the availability of 30S subunits on which protein synthesis initiation begins. The sequence is that of Translation initiation factor IF-3 from Geobacillus stearothermophilus (Bacillus stearothermophilus).